A 118-amino-acid chain; its full sequence is Myotrophin (118 aa).

3 ANK repeats span residues 1–30 (MGDK…DVNR), 34–65 (GGRK…NAAD), and 67–98 (HGIT…NVKG).

It belongs to the myotrophin family.

It localises to the cytoplasm. Its subcellular location is the nucleus. The protein localises to the perinuclear region. In terms of biological role, regulates NF-kappa-B transcription factor activity. Promotes growth of cardiomyocytes, but not cardiomyocyte proliferation. Promotes cardiac muscle hypertrophy. Plays a role in the regulation of the growth of actin filaments. Inhibits the activity of the F-actin-capping protein complex. The chain is Myotrophin (mtpn) from Xenopus laevis (African clawed frog).